Here is a 103-residue protein sequence, read N- to C-terminus: Insulin (103 aa).

The first 20 residues, 1 to 20 (IQSLPLLALLALSGPGTSHA), serve as a signal peptide directing secretion. 3 disulfide bridges follow: Cys27–Cys89, Cys39–Cys102, and Cys88–Cys93. Residues 53–80 (DAEHPLVNGPLHGEVGDLPFQQEEFEKV) constitute a propeptide, c peptide.

This sequence belongs to the insulin family. As to quaternary structure, heterodimer of a B chain and an A chain linked by two disulfide bonds.

It localises to the secreted. Its function is as follows. Insulin decreases blood glucose concentration. It increases cell permeability to monosaccharides, amino acids and fatty acids. It accelerates glycolysis, the pentose phosphate cycle, and glycogen synthesis in liver. This chain is Insulin (INS), found in Selasphorus rufus (Rufous hummingbird).